We begin with the raw amino-acid sequence, 383 residues long: Gamma-butyrobetaine dioxygenase (383 aa).

Positions 46, 48, 51, and 91 each coordinate Zn(2+). Residues H209, D211, and H350 each contribute to the Fe cation site.

This sequence belongs to the gamma-BBH/TMLD family. In terms of assembly, homodimer. The cofactor is Fe(2+). Requires L-ascorbate as cofactor.

Its subcellular location is the cytoplasm. The catalysed reaction is 4-(trimethylamino)butanoate + 2-oxoglutarate + O2 = carnitine + succinate + CO2. Its pathway is amine and polyamine biosynthesis; carnitine biosynthesis. In terms of biological role, catalyzes the formation of L-carnitine from gamma-butyrobetaine. The polypeptide is Gamma-butyrobetaine dioxygenase (Pseudomonas sp. (strain AK-1)).